A 178-amino-acid chain; its full sequence is Small ribosomal subunit protein uS5 (178 aa).

Residues 15–78 (FEEKIIEIRR…SAAKRNIIEV (64 aa)) enclose the S5 DRBM domain.

This sequence belongs to the universal ribosomal protein uS5 family. Part of the 30S ribosomal subunit. Contacts proteins S4 and S8.

With S4 and S12 plays an important role in translational accuracy. Functionally, located at the back of the 30S subunit body where it stabilizes the conformation of the head with respect to the body. The chain is Small ribosomal subunit protein uS5 from Thermotoga sp. (strain RQ2).